A 1052-amino-acid chain; its full sequence is Lateral signaling target protein 2 homolog (1052 aa).

5 disordered regions span residues 311–348 (YSSI…TSPH), 379–455 (PSML…DSDS), 506–539 (DEFG…STSA), 551–678 (LRLP…ASSF), and 814–973 (NTID…IPDG). Low complexity-rich tracts occupy residues 312-346 (SSIE…STTS), 379-392 (PSML…TPTA), and 400-419 (PSHS…NPPA). The span at 422–455 (SEDDDDDDEEREDDEEECGMLDSDEQDLNDDSDS) shows a compositional bias: acidic residues. Positions 554–574 (PSSSSENEQTTGSNQQSTIKT) are enriched in polar residues. 2 positions are modified to phosphoserine: serine 555 and serine 556. 2 stretches are compositionally biased toward basic residues: residues 588-614 (RQRH…HHQQ) and 625-644 (SHHH…ARKR). Residues 652-661 (STTAEQQQTI) show a composition bias toward polar residues. Residues 824 to 842 (NNNNNNNNNSGSSSSSNSS) show a composition bias toward low complexity. Serine 854 carries the post-translational modification Phosphoserine. Residues 872–915 (QQQQQQQAQLQLQMQRQRNNSVGSNSPSSSSSSSSSSEHNSPIS) show a composition bias toward low complexity. A compositionally biased stretch (polar residues) spans 926 to 935 (SNSASMPSIG). Low complexity predominate over residues 936 to 963 (STATTAAATAAATATTTTSATTTTTTTT). The FYVE-type zinc finger occupies 972–1032 (DGKAPRCMSC…VCRECYVREV (61 aa)). Zn(2+) contacts are provided by cysteine 978, cysteine 981, cysteine 994, cysteine 997, cysteine 1002, cysteine 1005, cysteine 1024, and cysteine 1027.

The protein belongs to the lst-2 family.

Functionally, negative regulator of epidermal growth factor receptor (EGFR) signaling. This is Lateral signaling target protein 2 homolog from Drosophila virilis (Fruit fly).